The following is a 290-amino-acid chain: 7-methylguanosine phosphate-specific 5'-nucleotidase B (290 aa).

The active-site Nucleophile is the Asp39. Residues Asp39 and Asp41 each coordinate Mg(2+). Asp41 acts as the Proton donor in catalysis. Glu86 lines the CMP pocket. Residue Glu86 coordinates N(7)-methyl-GMP. Substrate contacts are provided by residues 154-155 and Lys203; that span reads SA. Position 228 (Asp228) interacts with Mg(2+).

It belongs to the pyrimidine 5'-nucleotidase family. As to quaternary structure, monomer.

The protein resides in the cytoplasm. It catalyses the reaction N(7)-methyl-GMP + H2O = N(7)-methylguanosine + phosphate. It carries out the reaction CMP + H2O = cytidine + phosphate. The catalysed reaction is a ribonucleoside 5'-phosphate + H2O = a ribonucleoside + phosphate. In terms of biological role, specifically hydrolyzes 7-methylguanosine monophosphate (m(7)GMP) to 7-methylguanosine and inorganic phosphate. The specific activity for m(7)GMP may protect cells against undesired salvage of m(7)GMP and its incorporation into nucleic acids. Also has weak activity for CMP. UMP and purine nucleotides are poor substrates. The polypeptide is 7-methylguanosine phosphate-specific 5'-nucleotidase B (Nt5c3b-b) (Xenopus laevis (African clawed frog)).